Reading from the N-terminus, the 315-residue chain is 3-oxoacyl-[acyl-carrier-protein] reductase 3, chloroplastic (315 aa).

A chloroplast-targeting transit peptide spans 1-55 (MATTVAATKLTSLKAVKKLGFREIRQVRQWTPLQSSMPHFGSRQSFATSTVVKAQ). 77–101 (VTGASRGIGKAIALSLGKAGCKVLV) contributes to the NADP(+) binding site. Ser209 is a substrate binding site. Catalysis depends on Tyr222, which acts as the Proton acceptor.

This sequence belongs to the short-chain dehydrogenases/reductases (SDR) family. Homotetramer.

It localises to the plastid. It is found in the chloroplast. The enzyme catalyses a (3R)-hydroxyacyl-[ACP] + NADP(+) = a 3-oxoacyl-[ACP] + NADPH + H(+). It functions in the pathway lipid metabolism; fatty acid biosynthesis. In Brassica napus (Rape), this protein is 3-oxoacyl-[acyl-carrier-protein] reductase 3, chloroplastic (bkr3).